We begin with the raw amino-acid sequence, 439 residues long: Choline monooxygenase, chloroplastic (439 aa).

Residues 1-60 (MMAASASATTMLLKYPTTVCGIPNPSSNNNNDPSNNIVSIPQNTTNPTLKSRTPNKITTN) constitute a chloroplast transit peptide. The segment covering 24-41 (NPSSNNNNDPSNNIVSIP) has biased composition (low complexity). Residues 24 to 54 (NPSSNNNNDPSNNIVSIPQNTTNPTLKSRTP) are disordered. Over residues 42-54 (QNTTNPTLKSRTP) the composition is skewed to polar residues. The region spanning 120–227 (WQVAGISDQI…VAVWGPFVLI (108 aa)) is the Rieske domain. Positions 162, 164, 181, and 184 each coordinate [2Fe-2S] cluster. Fe cation-binding residues include His-287 and His-292.

As to quaternary structure, homotrimer or homodimer. The cofactor is [2Fe-2S] cluster. It depends on Fe cation as a cofactor. Mg(2+) serves as cofactor. As to expression, expressed in leaves.

The protein localises to the plastid. It is found in the chloroplast stroma. It carries out the reaction choline + 2 reduced [2Fe-2S]-[ferredoxin] + O2 + 2 H(+) = betaine aldehyde hydrate + 2 oxidized [2Fe-2S]-[ferredoxin] + H2O. It participates in amine and polyamine biosynthesis; betaine biosynthesis via choline pathway; betaine aldehyde from choline (monooxygenase route): step 1/1. Its function is as follows. Catalyzes the first step of the osmoprotectant glycine betaine synthesis. This is Choline monooxygenase, chloroplastic (CMO) from Spinacia oleracea (Spinach).